Consider the following 274-residue polypeptide: Bis(5'-nucleosyl)-tetraphosphatase, symmetrical (274 aa).

Belongs to the Ap4A hydrolase family.

The enzyme catalyses P(1),P(4)-bis(5'-adenosyl) tetraphosphate + H2O = 2 ADP + 2 H(+). Its function is as follows. Hydrolyzes diadenosine 5',5'''-P1,P4-tetraphosphate to yield ADP. The sequence is that of Bis(5'-nucleosyl)-tetraphosphatase, symmetrical from Shewanella baltica (strain OS223).